A 34-amino-acid polypeptide reads, in one-letter code: Protein HRURF (34 aa).

In terms of biological role, may function as an inhibitory translational control element that can negatively regulate protein translation of HR gene. The chain is Protein HRURF from Homo sapiens (Human).